Consider the following 79-residue polypeptide: DNA-directed RNA polymerase subunit omega (79 aa).

Belongs to the RNA polymerase subunit omega family. As to quaternary structure, the RNAP catalytic core consists of 2 alpha, 1 beta, 1 beta' and 1 omega subunit. When a sigma factor is associated with the core the holoenzyme is formed, which can initiate transcription.

It carries out the reaction RNA(n) + a ribonucleoside 5'-triphosphate = RNA(n+1) + diphosphate. Promotes RNA polymerase assembly. Latches the N- and C-terminal regions of the beta' subunit thereby facilitating its interaction with the beta and alpha subunits. The protein is DNA-directed RNA polymerase subunit omega of Bdellovibrio bacteriovorus (strain ATCC 15356 / DSM 50701 / NCIMB 9529 / HD100).